A 161-amino-acid polypeptide reads, in one-letter code: Troponin C, slow skeletal and cardiac muscles (161 aa).

Residue methionine 1 is modified to N-acetylmethionine. EF-hand domains are found at residues glutamine 16 to asparagine 51, proline 52 to aspartate 87, lysine 92 to threonine 127, and isoleucine 128 to glutamate 161. Ca(2+)-binding residues include aspartate 65, aspartate 67, serine 69, threonine 71, glutamate 76, aspartate 105, asparagine 107, aspartate 109, tyrosine 111, glutamate 116, aspartate 141, asparagine 143, aspartate 145, arginine 147, and glutamate 152.

This sequence belongs to the troponin C family.

Its function is as follows. Troponin is the central regulatory protein of striated muscle contraction. Tn consists of three components: Tn-I which is the inhibitor of actomyosin ATPase, Tn-T which contains the binding site for tropomyosin and Tn-C. The binding of calcium to Tn-C abolishes the inhibitory action of Tn on actin filaments. This Gallus gallus (Chicken) protein is Troponin C, slow skeletal and cardiac muscles (TNNC1).